Consider the following 233-residue polypeptide: Ribose-5-phosphate isomerase A (233 aa).

Substrate contacts are provided by residues S31–T34, D87–D90, and K100–G103. The active-site Proton acceptor is E109. Substrate is bound at residue K127.

It belongs to the ribose 5-phosphate isomerase family. As to quaternary structure, homodimer.

It carries out the reaction aldehydo-D-ribose 5-phosphate = D-ribulose 5-phosphate. Its pathway is carbohydrate degradation; pentose phosphate pathway; D-ribose 5-phosphate from D-ribulose 5-phosphate (non-oxidative stage): step 1/1. Catalyzes the reversible conversion of ribose-5-phosphate to ribulose 5-phosphate. The chain is Ribose-5-phosphate isomerase A from Chlamydia caviae (strain ATCC VR-813 / DSM 19441 / 03DC25 / GPIC) (Chlamydophila caviae).